We begin with the raw amino-acid sequence, 117 residues long: MNKNLARLRRARKTRARIASQAKPRLCVFRSGRHIYAQVIDDSQGKVLAQASTVEGELRASMGRGADVAAAATIGQRVAAKALAVGVKEVAFDRSGYRYHGRVRALADAAREGGLSF.

This sequence belongs to the universal ribosomal protein uL18 family. As to quaternary structure, part of the 50S ribosomal subunit; part of the 5S rRNA/L5/L18/L25 subcomplex. Contacts the 5S and 23S rRNAs.

This is one of the proteins that bind and probably mediate the attachment of the 5S RNA into the large ribosomal subunit, where it forms part of the central protuberance. This chain is Large ribosomal subunit protein uL18, found in Acidithiobacillus ferrooxidans (strain ATCC 23270 / DSM 14882 / CIP 104768 / NCIMB 8455) (Ferrobacillus ferrooxidans (strain ATCC 23270)).